A 393-amino-acid polypeptide reads, in one-letter code: Cholinephosphotransferase 1 (393 aa).

The Lumenal segment spans residues 1–40 (MGFFIPQSSLGNLKLYKYQSDDRSFLSNHVLRPFWRKFAT). A helical transmembrane segment spans residues 41–61 (IFPLWMAPNLVTLLGFCFIIF). Residues 62 to 172 (NVLTTLYYDP…YHTHKLYLAE (111 aa)) lie on the Cytoplasmic side of the membrane. The chain crosses the membrane as a helical span at residues 173–193 (FCGPVEGIIVLCISFIAVGIY). Residues 194–210 (GPQTIWHTKVAQFSWQD) lie on the Lumenal side of the membrane. A helical membrane pass occupies residues 211 to 231 (FVFDVETVHLMYAFCTGALIF). Residues 232–263 (NIVTAHTNVVRYYESQSTKSATPSKTAENISK) lie on the Cytoplasmic side of the membrane. The chain crosses the membrane as a helical span at residues 264–284 (AVNGLLPFFAYFSSIFTLVLI). Position 285 (Gln-285) is a topological domain, lumenal. The chain crosses the membrane as a helical span at residues 286–306 (PSFISLALILSIGFSVAFVVG). At 307–320 (RMIIAHLTMQPFPM) the chain is on the cytoplasmic side. A helical transmembrane segment spans residues 321–341 (VNFPFLIPTIQLVLYAFMVYV). Residues 342-348 (LDYQKGS) are Lumenal-facing. Residues 349-369 (IVSALVWMGLGLTLAIHGMFI) traverse the membrane as a helical segment. The Cytoplasmic portion of the chain corresponds to 370–393 (NDIIYDITTFLDIYALSIKHPKEI).

This sequence belongs to the CDP-alcohol phosphatidyltransferase class-I family. The cofactor is Mg(2+).

It is found in the microsome membrane. The protein localises to the endoplasmic reticulum membrane. Its subcellular location is the mitochondrion outer membrane. The catalysed reaction is CDP-choline + a 1,2-diacyl-sn-glycerol = a 1,2-diacyl-sn-glycero-3-phosphocholine + CMP + H(+). It catalyses the reaction CDP-N,N-dimethylethanolamine + a 1,2-diacyl-sn-glycerol = a 1,2-diacyl-sn-glycero-3-phospho-N,N-dimethylethanolamine + CMP + H(+). It functions in the pathway phospholipid metabolism; phosphatidylcholine biosynthesis; phosphatidylcholine from phosphocholine: step 2/2. Requires a divalent cation activator, and is inhibited by CMP. Activated by phospholipids, especially phosphatidylcholine. Catalyzes the final step in the CDP-choline route leading to phosphatidylcholin (PC). Preferentially uses CDP-monomethylethanolamine as aminoalcohol substrate. Shows highest activity toward di- and mono-unsaturated diacylglycerol species as lipid substrates. The CDP-choline pathway only contributes to net PC synthesis if exogenous choline is present. In its absence, this pathway recycles choline from PC turnover and may contribute to maintaining the proper PC species composition. The polypeptide is Cholinephosphotransferase 1 (CPT1) (Saccharomyces cerevisiae (strain ATCC 204508 / S288c) (Baker's yeast)).